The chain runs to 344 residues: Methionine import ATP-binding protein MetN (344 aa).

The 240-residue stretch at 2 to 241 (IKLEKISKIF…PQTQLAKEFI (240 aa)) folds into the ABC transporter domain. An ATP-binding site is contributed by 38-45 (GASGAGKS).

Belongs to the ABC transporter superfamily. Methionine importer (TC 3.A.1.24) family. The complex is composed of two ATP-binding proteins (MetN), two transmembrane proteins (MetI) and a solute-binding protein (MetQ).

Its subcellular location is the cell inner membrane. It catalyses the reaction L-methionine(out) + ATP + H2O = L-methionine(in) + ADP + phosphate + H(+). The enzyme catalyses D-methionine(out) + ATP + H2O = D-methionine(in) + ADP + phosphate + H(+). Its function is as follows. Part of the ABC transporter complex MetNIQ involved in methionine import. Responsible for energy coupling to the transport system. The chain is Methionine import ATP-binding protein MetN from Pasteurella multocida (strain Pm70).